Consider the following 539-residue polypeptide: Phosphoenolpyruvate carboxykinase (ATP) (539 aa).

Positions 64, 206, and 212 each coordinate substrate. ATP-binding positions include lysine 212, histidine 231, and glycine 247–threonine 255. The Mn(2+) site is built by lysine 212 and histidine 231. Aspartate 268 serves as a coordination point for Mn(2+). Residues glutamate 296, arginine 332, arginine 448–isoleucine 449, and threonine 454 each bind ATP. A substrate-binding site is contributed by arginine 332.

It belongs to the phosphoenolpyruvate carboxykinase (ATP) family. As to quaternary structure, monomer. Requires Mn(2+) as cofactor.

It is found in the cytoplasm. The enzyme catalyses oxaloacetate + ATP = phosphoenolpyruvate + ADP + CO2. The protein operates within carbohydrate biosynthesis; gluconeogenesis. Functionally, involved in the gluconeogenesis. Catalyzes the conversion of oxaloacetate (OAA) to phosphoenolpyruvate (PEP) through direct phosphoryl transfer between the nucleoside triphosphate and OAA. The protein is Phosphoenolpyruvate carboxykinase (ATP) of Erwinia tasmaniensis (strain DSM 17950 / CFBP 7177 / CIP 109463 / NCPPB 4357 / Et1/99).